Consider the following 343-residue polypeptide: Dihydroorotase (343 aa).

2 residues coordinate Zn(2+): histidine 13 and histidine 15. Residues 15–17 (HLR) and asparagine 41 contribute to the substrate site. 3 residues coordinate Zn(2+): lysine 99, histidine 136, and histidine 174. Lysine 99 carries the post-translational modification N6-carboxylysine. Histidine 136 is a binding site for substrate. Position 219 (leucine 219) interacts with substrate. A Zn(2+)-binding site is contributed by aspartate 247. Aspartate 247 is an active-site residue. Substrate contacts are provided by histidine 251 and alanine 263.

The protein belongs to the metallo-dependent hydrolases superfamily. DHOase family. Class II DHOase subfamily. As to quaternary structure, homodimer. The cofactor is Zn(2+).

The enzyme catalyses (S)-dihydroorotate + H2O = N-carbamoyl-L-aspartate + H(+). Its pathway is pyrimidine metabolism; UMP biosynthesis via de novo pathway; (S)-dihydroorotate from bicarbonate: step 3/3. Its function is as follows. Catalyzes the reversible cyclization of carbamoyl aspartate to dihydroorotate. This chain is Dihydroorotase, found in Shewanella baltica (strain OS223).